Consider the following 144-residue polypeptide: Maximins 4/H3 type 2 (144 aa).

Residues 1 to 18 form the signal peptide; that stretch reads MNFKYIIAVSFFIASAYA. A propeptide spanning residues 19-43 is cleaved from the precursor; the sequence is RRNEKDVQSLSQRDVLEEESLREIR. Asn70 bears the Asparagine amide mark. Positions 74–123 are excised as a propeptide; the sequence is TAEDHEVMKRLEAVMRDLDSLDHPEEASERETRGFNQEEIANLFTKKEKR. Ile143 carries the isoleucine amide modification.

The protein belongs to the bombinin family. Expressed by the skin glands.

It localises to the secreted. Functionally, maximin-4 shows antibacterial activity against both Gram-positive and Gram-negative bacteria. It also shows antimicrobial activity against the fungus C.albicans, but not against A.flavus nor P.uticale. It has little hemolytic activity. It does not possess a significant cytotoxicity against tumor cell lines. It does not possess a significant anti-HIV activity. Maximin-H3 shows antibacterial activity against both Gram-positive and Gram-negative bacteria. It also shows antimicrobial activity against the fungus C.albicans. Shows strong hemolytic activity. The protein is Maximins 4/H3 type 2 of Bombina maxima (Giant fire-bellied toad).